A 319-amino-acid chain; its full sequence is MGQGLWRVVRNQQLQQEGYSEQGYLTREQSRRMAASNISNTNHRKQVQGGIDIYHLLKARKSKEQEGFINLEMLPPELSFTILSYLNATDLCLASCVWQDLANDELLWQGLCKSTWGHCSIYNKNPPLGFSFRKLYMQLDEGSLTFNANPDEGVNYFMSKGILDDSPKEIAKFIFCTRTLNWKKLRIYLDERRDVLDDLVTLHNFRNQFLPNALREFFRHIHAPEERGEYLETLITKFSHRFCACNPDLMRELGLSPDAVYVLCYSLILLSIDLTSPHVKNKMSKREFIRNTRRAAQNISEDFVGHLYDNIYLIGHVAA.

The F-box domain maps to 68 to 111 (FINLEMLPPELSFTILSYLNATDLCLASCVWQDLANDELLWQGL). Residues 146-276 (FNANPDEGVN…LILLSIDLTS (131 aa)) enclose the SEC7 domain.

In terms of biological role, may promote guanine-nucleotide exchange on an ARF. Promotes the activation of ARF through replacement of GDP with GTP (Potential). In Homo sapiens (Human), this protein is F-box only protein 8 (FBXO8).